The primary structure comprises 235 residues: Small ribosomal subunit protein uS2 (235 aa).

This sequence belongs to the universal ribosomal protein uS2 family.

The chain is Small ribosomal subunit protein uS2 from Geobacillus kaustophilus (strain HTA426).